The sequence spans 607 residues: CRS2-associated factor 2, chloroplastic (607 aa).

The segment at 1 to 75 is disordered; sequence MSPPPPQRPS…GNGGNPAFRA (75 aa). A chloroplast-targeting transit peptide spans 1–79; sequence MSPPPPQRPS…NPAFRAPHLR (79 aa). 2 consecutive CRM domains span residues 228–324 and 346–442; these read EPLT…TRPR and EGLT…YPKP. The segment at 482-505 is CRS2 binding; the sequence is KMFELWTNAIESSVALMLDDAEVD. The interval 550-576 is disordered; sequence TEDEPETGTLEPQQHEFTESSDVAEDD.

As to quaternary structure, interacts with CRS2 and RNA. Part of large ribonucleo-protein complexes that include group IIB introns, CRS2 and CAF2.

It is found in the plastid. It localises to the chloroplast stroma. In terms of biological role, required for the splicing of group IIB introns in chloroplasts. Forms splicing particles with CRS2. Interacts with RNA and confers intron specificity of the splicing particles. This is CRS2-associated factor 2, chloroplastic from Oryza sativa subsp. japonica (Rice).